A 126-amino-acid chain; its full sequence is Probable prefoldin subunit 4 (126 aa).

The protein belongs to the prefoldin subunit beta family. In terms of assembly, heterohexamer of two PFD-alpha type and four PFD-beta type subunits.

Functionally, binds specifically to cytosolic chaperonin (c-CPN) and transfers target proteins to it. Binds to nascent polypeptide chain and promotes folding in an environment in which there are many competing pathways for nonnative proteins. The chain is Probable prefoldin subunit 4 (pfd-4) from Caenorhabditis elegans.